The following is a 41-amino-acid chain: Photosystem I reaction center subunit IX (41 aa).

A helical membrane pass occupies residues 7–27; it reads YLSVAPVLSTLWFGALAGLLI.

It belongs to the PsaJ family.

Its subcellular location is the plastid. The protein localises to the chloroplast thylakoid membrane. Its function is as follows. May help in the organization of the PsaE and PsaF subunits. In Jasminum nudiflorum (Winter jasmine), this protein is Photosystem I reaction center subunit IX.